Consider the following 200-residue polypeptide: Golgi to ER traffic protein 1 (200 aa).

Residues 1-6 (MEPYTL) lie on the Lumenal side of the membrane. The helical transmembrane segment at 7–26 (LLFIFVIQIVKQIISAVGKQ) threads the bilayer. The Cytoplasmic segment spans residues 27 to 113 (SIESISWVLY…KVNTFTGYLI (87 aa)). The stretch at 75–107 (AKWTKLNRQHDKLVAEIEQLQKEVDLDKVKVNT) forms a coiled coil. Residues 114–134 (AILTSIPIWFFRVWYRSVVLF) form a helical membrane-spanning segment. Residues 135–158 (YFPPGILPRALEWSIALPFTVTGG) lie on the Lumenal side of the membrane. The chain crosses the membrane as a helical span at residues 159-175 (VSLTVWMMAAGAVASSL). The Cytoplasmic segment spans residues 176 to 200 (TFLFMFPFEKAVPKPVLAKKSPQQL).

This sequence belongs to the WRB/GET1 family. In terms of assembly, component of the Golgi to ER traffic (GET) complex, which is composed of GET1, GET2 and GET3. Within the complex, GET1 and GET2 form a heterotetramer which is stabilized by phosphatidylinositol binding and which binds to the GET3 homodimer.

It localises to the endoplasmic reticulum membrane. The protein resides in the golgi apparatus membrane. Required for the post-translational delivery of tail-anchored (TA) proteins to the endoplasmic reticulum. Together with GET2, acts as a membrane receptor for soluble GET3, which recognizes and selectively binds the transmembrane domain of TA proteins in the cytosol. The GET complex cooperates with the HDEL receptor ERD2 to mediate the ATP-dependent retrieval of resident ER proteins that contain a C-terminal H-D-E-L retention signal from the Golgi to the ER. The polypeptide is Golgi to ER traffic protein 1 (Meyerozyma guilliermondii (strain ATCC 6260 / CBS 566 / DSM 6381 / JCM 1539 / NBRC 10279 / NRRL Y-324) (Yeast)).